The primary structure comprises 4662 residues: Protein PF3D7_1417600 (4662 aa).

The next 2 membrane-spanning stretches (helical) occupy residues 136 to 156 (INYV…YLYI) and 161 to 181 (YIYY…FHII). One copy of the LRR 1 repeat lies at 466–489 (IKNIDSINKNHKRLIKISNYNITN). A disordered region spans residues 583 to 710 (YRNDGDVNNK…KMKPDNTLNE (128 aa)). Over residues 590–644 (NNKNGYNNNEHSNSSNERSNNNGDNNNNNHNNNNHNNNHHNNGSNNHNGNNNSNN) the composition is skewed to low complexity. The span at 650-666 (DDDKKGNDKKNEDKDDE) shows a compositional bias: basic and acidic residues. The segment covering 690–701 (KKRKEKSKNKNK) has biased composition (basic residues). The HSA domain maps to 783–856 (YKPTEPVNIF…ISNDIKMFWF (74 aa)). Residues 942-967 (GLMNKMSHQNGKNNNHNDYNNKCEDN) are disordered. One copy of the LRR 2 repeat lies at 1150–1172 (NVHINHIQYDDNNLYYNDDLYNY). The segment covering 1505–1524 (NNNNNSNNNNSNSNNNSNSN) has biased composition (low complexity). 2 disordered regions span residues 1505-1540 (NNNN…NNSS) and 1705-1761 (KINS…NEKD). Basic and acidic residues predominate over residues 1710–1761 (NNDKSDDKNDDKNDKKNDGKNDKNDEKDDNKTGEKGDNKIGEKDDNKINEKD). LRR repeat units lie at residues 2063-2086 (ITKV…MFNK) and 2129-2153 (DEEI…NVKD). The interval 2228–2261 (KNKSNKKKRAKKNIKLGEEENESECNNEGECNNE) is disordered. Basic residues predominate over residues 2230–2241 (KSNKKKRAKKNI). Residues 2246–2261 (EENESECNNEGECNNE) show a composition bias toward acidic residues. LRR repeat units follow at residues 2672-2695 (LDKL…KTID), 2773-2796 (NTVL…TVDI), 2864-2888 (INDD…VNNN), and 2904-2929 (ANNI…YNNS). Positions 2956 to 2975 (MNNTKQRSHSSYHTSFPMQN) are disordered. LRR repeat units follow at residues 3377 to 3400 (QNNM…NITM), 3438 to 3461 (NNSM…YNNS), 3756 to 3781 (SQRL…NINN), 3935 to 3960 (QPNI…NINN), 3965 to 3985 (QPNI…SMNQ), and 3986 to 4010 (PNIN…NINN). The stretch at 4203-4272 (DMNQQERLQQ…ERLQQKWEQQ (70 aa)) forms a coiled coil. 2 LRR repeats span residues 4296–4321 (YQEL…IFLK) and 4333–4357 (QKMH…SLQQ). The disordered stretch occupies residues 4384-4412 (QMNHQQINKHQMNQQQMNKQQMNQQQINQ).

It localises to the membrane. In Plasmodium falciparum (isolate 3D7), this protein is Protein PF3D7_1417600.